Reading from the N-terminus, the 245-residue chain is Tryptophan synthase alpha chain (245 aa).

Catalysis depends on proton acceptor residues Glu35 and Asp46.

The protein belongs to the TrpA family. Tetramer of two alpha and two beta chains.

It catalyses the reaction (1S,2R)-1-C-(indol-3-yl)glycerol 3-phosphate + L-serine = D-glyceraldehyde 3-phosphate + L-tryptophan + H2O. Its pathway is amino-acid biosynthesis; L-tryptophan biosynthesis; L-tryptophan from chorismate: step 5/5. In terms of biological role, the alpha subunit is responsible for the aldol cleavage of indoleglycerol phosphate to indole and glyceraldehyde 3-phosphate. This Sulfurisphaera tokodaii (strain DSM 16993 / JCM 10545 / NBRC 100140 / 7) (Sulfolobus tokodaii) protein is Tryptophan synthase alpha chain.